Here is a 480-residue protein sequence, read N- to C-terminus: MTLSFTTHWRDELPDFYTSLSPTPLDNARLIWRNAPLAQQLGVPDALFAPESGAGVWGGEALLPGMSPLAQVYSGHQFGAWAGQLGDGRGILLGEQQLADGRRYDWHLKGAGLTPYSRMGDGRAVLRSTIRESLASEAMHALGIPTTRALAMVTSDTPVYRERVEPGAMLMRVAESHVRFGHFEHFYYRREPQKVQQLADYVIRHHWPQLQDEADKYLLWFRDIVMRTAQTIASWQTVGFAHGVMNTDNMSILGLTIDYGPYGFLDDFQPDFICNHSDYQGRYSFENQPAVGLWNLQRLAQSLSPFISAEALNAALDEYQHALLTAYGQRMRDKLGLFSQQKGDNDLLDGLFALMIREKSDYTRTFRLLSHSEQLSAASPLRDEFIDRAAFDSWFAGYRARLRDEQVDDAQRQQRMQGVNPALVLRNWLAQRAIEQAEAGDMGELERLHAALADPFTDREDDYVRRPPDWGKRLEVSCSS.

ATP-binding residues include Gly-86, Gly-88, Arg-89, Lys-109, Asp-121, Gly-122, Arg-172, and Arg-179. Asp-248 acts as the Proton acceptor in catalysis. 2 residues coordinate Mg(2+): Asn-249 and Asp-258. An ATP-binding site is contributed by Asp-258.

Belongs to the SELO family. The cofactor is Mg(2+). Mn(2+) serves as cofactor.

It catalyses the reaction L-seryl-[protein] + ATP = 3-O-(5'-adenylyl)-L-seryl-[protein] + diphosphate. It carries out the reaction L-threonyl-[protein] + ATP = 3-O-(5'-adenylyl)-L-threonyl-[protein] + diphosphate. The catalysed reaction is L-tyrosyl-[protein] + ATP = O-(5'-adenylyl)-L-tyrosyl-[protein] + diphosphate. The enzyme catalyses L-histidyl-[protein] + UTP = N(tele)-(5'-uridylyl)-L-histidyl-[protein] + diphosphate. It catalyses the reaction L-seryl-[protein] + UTP = O-(5'-uridylyl)-L-seryl-[protein] + diphosphate. It carries out the reaction L-tyrosyl-[protein] + UTP = O-(5'-uridylyl)-L-tyrosyl-[protein] + diphosphate. Its function is as follows. Nucleotidyltransferase involved in the post-translational modification of proteins. It can catalyze the addition of adenosine monophosphate (AMP) or uridine monophosphate (UMP) to a protein, resulting in modifications known as AMPylation and UMPylation. The protein is Protein nucleotidyltransferase YdiU of Klebsiella pneumoniae subsp. pneumoniae (strain ATCC 700721 / MGH 78578).